A 599-amino-acid polypeptide reads, in one-letter code: Elongation factor 4 (599 aa).

One can recognise a tr-type G domain in the interval 2–184; the sequence is KNIRNFSIIA…RLVRDIPPPE (183 aa). GTP contacts are provided by residues 14 to 19 and 131 to 134; these read DHGKST and NKID.

Belongs to the TRAFAC class translation factor GTPase superfamily. Classic translation factor GTPase family. LepA subfamily.

It localises to the cell inner membrane. It carries out the reaction GTP + H2O = GDP + phosphate + H(+). In terms of biological role, required for accurate and efficient protein synthesis under certain stress conditions. May act as a fidelity factor of the translation reaction, by catalyzing a one-codon backward translocation of tRNAs on improperly translocated ribosomes. Back-translocation proceeds from a post-translocation (POST) complex to a pre-translocation (PRE) complex, thus giving elongation factor G a second chance to translocate the tRNAs correctly. Binds to ribosomes in a GTP-dependent manner. In Citrobacter koseri (strain ATCC BAA-895 / CDC 4225-83 / SGSC4696), this protein is Elongation factor 4.